The sequence spans 160 residues: Anaerobic nitrite reductase MHB1 (160 aa).

One can recognise a Globin domain in the interval 8 to 157; sequence GFTEEQEALV…LVNAIKSEMK (150 aa). The Homodimerization motif lies at 41 to 45; sequence EIAPS. The heme b site is built by Ser51, Lys65, His69, Lys99, and His104. The Homodimerization signature appears at 111-123; that stretch reads DEHFEVTKFALLE.

It belongs to the plant globin family. As to quaternary structure, homodimer. Heme b is required as a cofactor. In terms of tissue distribution, root specific.

Its subcellular location is the nucleus matrix. The protein resides in the cytoplasm. It carries out the reaction Fe(III)-heme b-[protein] + nitric oxide + H2O = Fe(II)-heme b-[protein] + nitrite + 2 H(+). Functionally, phytoglobin that reduces nitrite to nitric oxide (NO) under anoxic conditions (e.g. during flooding or in waterlogged soil) and upon root nodulation. Required for general plant development and during nodulation, especially for the onset of symbiosis. Monitors nitric oxide (NO) levels during early phase of the nitrogen-fixing symbiosis and buffers oxygen in functioning nodules. May not function as an oxygen storage or transport protein. Has an unusually high affinity for O(2) through a hexacoordinate heme iron because of a very low dissociation constant. The sequence is that of Anaerobic nitrite reductase MHB1 from Medicago sativa (Alfalfa).